Reading from the N-terminus, the 620-residue chain is DNA mismatch repair protein MutL (620 aa).

Residues 332–402 (SELGLEAQPE…YRTPLRPATH (71 aa)) are disordered. Residues 352–365 (SNSTNSNVSSTSYS) are compositionally biased toward low complexity. Polar residues predominate over residues 378 to 394 (PLTTTATSYNQGQSSYR).

This sequence belongs to the DNA mismatch repair MutL/HexB family.

This protein is involved in the repair of mismatches in DNA. It is required for dam-dependent methyl-directed DNA mismatch repair. May act as a 'molecular matchmaker', a protein that promotes the formation of a stable complex between two or more DNA-binding proteins in an ATP-dependent manner without itself being part of a final effector complex. This Shewanella piezotolerans (strain WP3 / JCM 13877) protein is DNA mismatch repair protein MutL.